We begin with the raw amino-acid sequence, 360 residues long: Protein Wnt-2 (360 aa).

A signal peptide spans 1-25 (MNAPLGGIWLWLPLLLTWLTPEVSS). 11 disulfides stabilise this stretch: Cys-76–Cys-87, Cys-127–Cys-135, Cys-137–Cys-157, Cys-206–Cys-220, Cys-208–Cys-215, Cys-278–Cys-309, Cys-294–Cys-304, Cys-308–Cys-348, Cys-324–Cys-339, Cys-326–Cys-336, and Cys-331–Cys-332. Ser-212 carries O-palmitoleoyl serine; by PORCN lipidation. Asn-295 carries an N-linked (GlcNAc...) asparagine glycan.

Belongs to the Wnt family. Palmitoleoylation is required for efficient binding to frizzled receptors. Depalmitoleoylation leads to Wnt signaling pathway inhibition.

Its subcellular location is the secreted. It is found in the extracellular space. It localises to the extracellular matrix. Ligand for members of the frizzled family of seven transmembrane receptors. Functions in the canonical Wnt signaling pathway that results in activation of transcription factors of the TCF/LEF family. This is Protein Wnt-2 (WNT2) from Dasypus novemcinctus (Nine-banded armadillo).